A 651-amino-acid polypeptide reads, in one-letter code: Peptide-N(4)-(N-acetyl-beta-glucosaminyl)asparagine amidase (651 aa).

One can recognise a PUB domain in the interval 29–90 (EASRLLLTYA…EGETHMVFPK (62 aa)). Zn(2+) is bound by residues C246, C249, C279, and C282. The active-site Nucleophile is the C305. Residues H332 and D349 contribute to the active site. The 202-residue stretch at 450 to 651 (EFGGRTSGSM…LEMIIKLADL (202 aa)) folds into the PAW domain.

It belongs to the transglutaminase-like superfamily. PNGase family. Zn(2+) is required as a cofactor.

The protein localises to the cytoplasm. It catalyses the reaction Hydrolysis of an N(4)-(acetyl-beta-D-glucosaminyl)asparagine residue in which the glucosamine residue may be further glycosylated, to yield a (substituted) N-acetyl-beta-D-glucosaminylamine and a peptide containing an aspartate residue.. Its function is as follows. Specifically deglycosylates the denatured form of N-linked glycoproteins in the cytoplasm and assists their proteasome-mediated degradation. Cleaves the beta-aspartyl-glucosamine (GlcNAc) of the glycan and the amide side chain of Asn, converting Asn to Asp. Prefers proteins containing high-mannose over those bearing complex type oligosaccharides. Can recognize misfolded proteins in the endoplasmic reticulum that are exported to the cytosol to be destroyed and deglycosylate them, while it has no activity toward native proteins. Deglycosylation is a prerequisite for subsequent proteasome-mediated degradation of some, but not all, misfolded glycoproteins. The sequence is that of Peptide-N(4)-(N-acetyl-beta-glucosaminyl)asparagine amidase (NGLY1) from Gallus gallus (Chicken).